The following is a 64-amino-acid chain: Large ribosomal subunit protein bL35 (64 aa).

2 disordered regions span residues 1–22 (MPKA…TGKI) and 34–64 (EHKP…LLNG). Basic and acidic residues predominate over residues 34–48 (EHKPSTRTRRLDGHT). Residues 50-64 (VSANDTQRVNSLLNG) show a composition bias toward polar residues.

The protein belongs to the bacterial ribosomal protein bL35 family.

The polypeptide is Large ribosomal subunit protein bL35 (Mycobacterium leprae (strain Br4923)).